The sequence spans 155 residues: RING finger protein 122 (155 aa).

The helical transmembrane segment at 40–60 threads the bilayer; that stretch reads VIFGTGIFVFMLSLIFCCYFI. The segment at 93 to 134 adopts an RING-type; atypical zinc-finger fold; sequence CAVCLEDFKGKDELGVLPCQHAFHRKCLVKWLEVRCVCPMCN.

Its subcellular location is the golgi apparatus. It localises to the endoplasmic reticulum. The protein localises to the membrane. Its function is as follows. May induce necrosis and apoptosis. May play a role in cell viability. The polypeptide is RING finger protein 122 (Rnf122) (Mus musculus (Mouse)).